A 418-amino-acid chain; its full sequence is Nickel and cobalt resistance protein CnrC (418 aa).

The first 29 residues, 1-29 (MKQVISSFLCRPRFVGSAIWLLPVALSHA), serve as a signal peptide directing secretion.

This sequence belongs to the outer membrane factor (OMF) (TC 1.B.17) family.

In terms of biological role, the products of the genes cnrA, cnrB, and cnrC are likely to form a membrane-bound protein complex catalyzing an energy-dependent efflux of Ni(2+) and Co(2+). The mechanism of action of the CnrCBA complex may be that of a proton/cation antiporter. This is Nickel and cobalt resistance protein CnrC (cnrC) from Cupriavidus metallidurans (strain ATCC 43123 / DSM 2839 / NBRC 102507 / CH34) (Ralstonia metallidurans).